The primary structure comprises 206 residues: Cytidylate kinase (206 aa).

Residue 7–15 participates in ATP binding; sequence GVAASGKSS.

Belongs to the cytidylate kinase family. Type 1 subfamily.

The protein localises to the cytoplasm. It carries out the reaction CMP + ATP = CDP + ADP. The enzyme catalyses dCMP + ATP = dCDP + ADP. The protein is Cytidylate kinase of Deinococcus radiodurans (strain ATCC 13939 / DSM 20539 / JCM 16871 / CCUG 27074 / LMG 4051 / NBRC 15346 / NCIMB 9279 / VKM B-1422 / R1).